The primary structure comprises 270 residues: Urease accessory protein UreD (270 aa).

It belongs to the UreD family. As to quaternary structure, ureD, UreF and UreG form a complex that acts as a GTP-hydrolysis-dependent molecular chaperone, activating the urease apoprotein by helping to assemble the nickel containing metallocenter of UreC. The UreE protein probably delivers the nickel.

It is found in the cytoplasm. In terms of biological role, required for maturation of urease via the functional incorporation of the urease nickel metallocenter. This is Urease accessory protein UreD from Actinobacillus pleuropneumoniae serotype 3 (strain JL03).